A 117-amino-acid chain; its full sequence is Ribonuclease P protein component (117 aa).

This sequence belongs to the RnpA family. In terms of assembly, consists of a catalytic RNA component (M1 or rnpB) and a protein subunit.

The enzyme catalyses Endonucleolytic cleavage of RNA, removing 5'-extranucleotides from tRNA precursor.. RNaseP catalyzes the removal of the 5'-leader sequence from pre-tRNA to produce the mature 5'-terminus. It can also cleave other RNA substrates such as 4.5S RNA. The protein component plays an auxiliary but essential role in vivo by binding to the 5'-leader sequence and broadening the substrate specificity of the ribozyme. The sequence is that of Ribonuclease P protein component from Nocardioides sp. (strain ATCC BAA-499 / JS614).